The following is a 1715-amino-acid chain: Sodium channel protein type 4 subunit alpha B (1715 aa).

Residues M1–S126 lie on the Cytoplasmic side of the membrane. The I repeat unit spans residues L108–N431. A helical membrane pass occupies residues L127–L145. At S146–S152 the chain is on the extracellular side. The helical transmembrane segment at K153–S173 threads the bilayer. Over R174 to P187 the chain is Cytoplasmic. The chain crosses the membrane as a helical span at residues W188–V205. Residues D206–S211 lie on the Extracellular side of the membrane. N-linked (GlcNAc...) asparagine glycosylation is present at N209. A helical transmembrane segment spans residues V212–I228. Residues P229 to D247 are Cytoplasmic-facing. The helical transmembrane segment at A248–F267 threads the bilayer. Residues M268–S368 lie on the Extracellular side of the membrane. C275 and C337 form a disulfide bridge. 3 N-linked (GlcNAc...) asparagine glycosylation sites follow: N284, N304, and N339. Residues C346 and C352 are joined by a disulfide bond. Residues F369–L393 constitute an intramembrane region (pore-forming). The Extracellular portion of the chain corresponds to R394–Y400. The chain crosses the membrane as a helical span at residues M401–A421. The Cytoplasmic portion of the chain corresponds to V422–P515. One copy of the II repeat lies at C497–A768. The chain crosses the membrane as a helical span at residues F516–M534. Over E535 to E545 the chain is Extracellular. The helical transmembrane segment at L546–K565 threads the bilayer. Residues I566 to W579 lie on the Cytoplasmic side of the membrane. Residues N580–V599 traverse the membrane as a helical segment. At Q600–G601 the chain is on the extracellular side. The chain crosses the membrane as a helical span at residues L602–S619. At W620–G635 the chain is on the cytoplasmic side. Residues A636–V654 form a helical membrane-spanning segment. At G655–D683 the chain is on the extracellular side. C668 and C674 are disulfide-bonded. Positions F684–W704 form an intramembrane region, pore-forming. Residues D705 to C715 are Extracellular-facing. Cysteines 706 and 715 form a disulfide. Residues L716–F734 traverse the membrane as a helical segment. The Cytoplasmic portion of the chain corresponds to L735 to Y915. Residues E824–D865 are disordered. Acidic residues predominate over residues A825–D838. One copy of the III repeat lies at K896 to L1211. A helical membrane pass occupies residues F916 to F933. Residues E934–T946 are Extracellular-facing. Residues I947–L965 traverse the membrane as a helical segment. Residues K966–A979 lie on the Cytoplasmic side of the membrane. The helical transmembrane segment at W980–N998 threads the bilayer. At I999 to G1006 the chain is on the extracellular side. The chain crosses the membrane as a helical span at residues A1007 to R1025. At F1026 to S1042 the chain is on the cytoplasmic side. A helical membrane pass occupies residues I1043–V1062. Topologically, residues N1063–V1115 are extracellular. A disulfide bridge links C1072 with C1092. 2 N-linked (GlcNAc...) asparagine glycosylation sites follow: N1074 and N1088. Positions G1116–A1137 form an intramembrane region, pore-forming. Topologically, residues A1138–I1154 are extracellular. A helical transmembrane segment spans residues Y1155–I1176. At G1177–I1239 the chain is on the cytoplasmic side. An important for rapid channel inactivation region spans residues I1195–M1197. The IV repeat unit spans residues V1220 to Q1517. Residues F1240–V1257 traverse the membrane as a helical segment. Over E1258–D1268 the chain is Extracellular. The helical transmembrane segment at I1269–L1287 threads the bilayer. Residues K1288–I1299 lie on the Cytoplasmic side of the membrane. A helical transmembrane segment spans residues G1300 to L1317. Residues L1318–T1330 are Extracellular-facing. The chain crosses the membrane as a helical span at residues L1331–I1347. Residues R1348 to A1366 lie on the Cytoplasmic side of the membrane. The helical transmembrane segment at L1367–F1384 threads the bilayer. At G1385–T1406 the chain is on the extracellular side. The segment at residues F1407–P1429 is an intramembrane region (pore-forming). The Extracellular portion of the chain corresponds to I1430–G1458. Cysteines 1437 and 1452 form a disulfide. Residues I1459 to I1481 form a helical membrane-spanning segment. Topologically, residues L1482–V1715 are cytoplasmic. An IQ domain is found at E1611–E1640.

It belongs to the sodium channel (TC 1.A.1.10) family. Nav1.4/SCN4A subfamily. As to quaternary structure, voltage-gated sodium (Nav) channels consist of an ion-conducting alpha subunit which is functional on its own associated with regulatory beta subunits.

It localises to the cell membrane. It carries out the reaction Na(+)(in) = Na(+)(out). Functionally, pore-forming subunit of a voltage-gated sodium (Nav) channel that directly mediates the depolarizing phase of action potentials in excitable membranes. Navs, also called VGSCs (voltage-gated sodium channels) or VDSCs (voltage-dependent sodium channels), operate by switching between closed and open conformations depending on the voltage difference across the membrane. In the open conformation they allow Na(+) ions to selectively pass through the pore, along their electrochemical gradient. The influx of Na+ ions provokes membrane depolarization, initiating the propagation of electrical signals throughout cells and tissues. This Tetraodon nigroviridis (Spotted green pufferfish) protein is Sodium channel protein type 4 subunit alpha B (scn4ab).